A 902-amino-acid polypeptide reads, in one-letter code: Phosphoenolpyruvate carboxylase (902 aa).

His132 is a catalytic residue. A disordered region spans residues 327–346 (DALERPEKTAGKKSSKRTPY). The active site involves Lys561.

The protein belongs to the PEPCase type 1 family. Mg(2+) serves as cofactor.

The catalysed reaction is oxaloacetate + phosphate = phosphoenolpyruvate + hydrogencarbonate. Its function is as follows. Forms oxaloacetate, a four-carbon dicarboxylic acid source for the tricarboxylic acid cycle. The protein is Phosphoenolpyruvate carboxylase of Corynebacterium diphtheriae (strain ATCC 700971 / NCTC 13129 / Biotype gravis).